The sequence spans 500 residues: Trans-cinnamate 4-monooxygenase (500 aa).

A helical membrane pass occupies residues 3-23; it reads ALLVEKVLLGLFVAAVLALVV. (E)-cinnamate is bound by residues 213–218 and A302; that span reads RSRLSQ. Residue C442 coordinates heme.

This sequence belongs to the cytochrome P450 family. It depends on heme as a cofactor. In terms of tissue distribution, expressed in roots and leaves.

It is found in the membrane. The enzyme catalyses (E)-cinnamate + reduced [NADPH--hemoprotein reductase] + O2 = (E)-4-coumarate + oxidized [NADPH--hemoprotein reductase] + H2O + H(+). The protein operates within phenylpropanoid metabolism; trans-4-coumarate biosynthesis; trans-4-coumarate from trans-cinnamate: step 1/1. Functionally, catalyzes the first oxidative step of the phenylpropanoid pathway in higher plants by transforming trans-cinnamate into p-coumarate. The compounds formed by this pathway are essential components for lignification, pollination, and defense against ultraviolet light, predators and pathogens. The chain is Trans-cinnamate 4-monooxygenase from Oryza sativa subsp. japonica (Rice).